Consider the following 162-residue polypeptide: NADH-quinone oxidoreductase subunit I (162 aa).

4Fe-4S ferredoxin-type domains follow at residues 53-83 (QRRYANGEERCIACKLCEAVCPAMAISIESE) and 93-122 (SRYDIDLTKCIFCGFCEEACPVDAIVETHI). Positions 63, 66, 69, 73, 102, 105, 108, and 112 each coordinate [4Fe-4S] cluster.

The protein belongs to the complex I 23 kDa subunit family. NDH-1 is composed of 14 different subunits. Subunits NuoA, H, J, K, L, M, N constitute the membrane sector of the complex. [4Fe-4S] cluster serves as cofactor.

Its subcellular location is the cell inner membrane. It catalyses the reaction a quinone + NADH + 5 H(+)(in) = a quinol + NAD(+) + 4 H(+)(out). Its function is as follows. NDH-1 shuttles electrons from NADH, via FMN and iron-sulfur (Fe-S) centers, to quinones in the respiratory chain. The immediate electron acceptor for the enzyme in this species is believed to be ubiquinone. Couples the redox reaction to proton translocation (for every two electrons transferred, four hydrogen ions are translocated across the cytoplasmic membrane), and thus conserves the redox energy in a proton gradient. The sequence is that of NADH-quinone oxidoreductase subunit I from Chromobacterium violaceum (strain ATCC 12472 / DSM 30191 / JCM 1249 / CCUG 213 / NBRC 12614 / NCIMB 9131 / NCTC 9757 / MK).